The sequence spans 446 residues: Exodeoxyribonuclease 7 large subunit (446 aa).

Belongs to the XseA family. Heterooligomer composed of large and small subunits.

The protein resides in the cytoplasm. The enzyme catalyses Exonucleolytic cleavage in either 5'- to 3'- or 3'- to 5'-direction to yield nucleoside 5'-phosphates.. Bidirectionally degrades single-stranded DNA into large acid-insoluble oligonucleotides, which are then degraded further into small acid-soluble oligonucleotides. This Streptococcus pneumoniae serotype 19F (strain G54) protein is Exodeoxyribonuclease 7 large subunit.